The sequence spans 590 residues: Glypican-3 (590 aa).

The N-terminal stretch at 1-25 (MMPGLKLYGALILCVLVLPFSRPSS) is a signal peptide. Disulfide bonds link Cys-30–Cys-67, Cys-60–Cys-255, Cys-68–Cys-258, Cys-190–Cys-342, Cys-245–Cys-278, Cys-267–Cys-418, and Cys-271–Cys-406. Asn-119 and Asn-234 each carry an N-linked (GlcNAc...) asparagine glycan. Asn-414 carries N-linked (GlcNAc...) asparagine glycosylation. Disordered regions lie at residues 429-450 (PGPG…TPEP) and 476-520 (WRAR…SGLG). Acidic residues predominate over residues 495 to 513 (TDEDEEGLESGDCDDEDEC). 2 O-linked (Xyl...) (glycosaminoglycan) serine glycosylation sites follow: Ser-504 and Ser-517.

The protein belongs to the glypican family. As to quaternary structure, heterodimer; disulfide-linked. Cleavage by a furin-like convertase results in production of alpha and beta chains which form a disulfide-linked heterodimer. Post-translationally, O-glycosylated; contains heparan sulfate and/or chondroitin sulfate. Cleaved intracellularly by a furin-like convertase to generate 2 subunits, alpha and beta, which remain associated through disulfide bonds and are associated with the cell surface via the GPI-anchor. This processing is essential for its role in inhibition of hedgehog signaling. A second proteolytic event may result in cleavage of the protein on the cell surface, separating it from the GPI-anchor and leading to its shedding from the cell surface. In terms of tissue distribution, maternally expressed and is almost ubiquitous during blastula and gastrula stages but becomes restricted to the prospective hindbrain by 24 hours post-fertilization.

It localises to the cell membrane. Cell surface proteoglycan. Negatively regulates the hedgehog signaling pathway. Positively regulates the canonical and non-canonical Wnt signaling pathways. Binds to CD81 which decreases the availability of free CD81 for binding to the transcriptional repressor HHEX, resulting in nuclear translocation of HHEX and transcriptional repression. Inhibits the dipeptidyl peptidase activity of DPP4. Plays a role in limb patterning and skeletal development. Modulates the effects of growth factors on renal branching morphogenesis. Required for coronary vascular development. Plays a role in regulating cell movements during gastrulation. The polypeptide is Glypican-3 (Danio rerio (Zebrafish)).